The sequence spans 460 residues: Chromosomal replication initiator protein DnaA (460 aa).

A domain I, interacts with DnaA modulators region spans residues 1-84 (MAVSLWQQCI…RFDIGSRPSA (84 aa)). The interval 84–123 (AKKPEPAPVAAVRVPNPQTKASVGTSFNTTEPVANANHRS) is domain II. Residues 124–340 (NINPTYQFDN…GALNRVIANA (217 aa)) are domain III, AAA+ region. ATP contacts are provided by Gly168, Gly170, Lys171, and Thr172. A domain IV, binds dsDNA region spans residues 341–460 (NFTGRPITID…YANLIRTLSS (120 aa)).

The protein belongs to the DnaA family. In terms of assembly, oligomerizes as a right-handed, spiral filament on DNA at oriC.

The protein localises to the cytoplasm. In terms of biological role, plays an essential role in the initiation and regulation of chromosomal replication. ATP-DnaA binds to the origin of replication (oriC) to initiate formation of the DNA replication initiation complex once per cell cycle. Binds the DnaA box (a 9 base pair repeat at the origin) and separates the double-stranded (ds)DNA. Forms a right-handed helical filament on oriC DNA; dsDNA binds to the exterior of the filament while single-stranded (ss)DNA is stabiized in the filament's interior. The ATP-DnaA-oriC complex binds and stabilizes one strand of the AT-rich DNA unwinding element (DUE), permitting loading of DNA polymerase. After initiation quickly degrades to an ADP-DnaA complex that is not apt for DNA replication. Binds acidic phospholipids. This Shewanella sp. (strain ANA-3) protein is Chromosomal replication initiator protein DnaA.